A 173-amino-acid polypeptide reads, in one-letter code: Small ribosomal subunit protein uS5 (173 aa).

Positions 17–80 (WQERVIQIRR…ADGKKQLIEV (64 aa)) constitute an S5 DRBM domain.

This sequence belongs to the universal ribosomal protein uS5 family. Part of the 30S ribosomal subunit. Contacts proteins S4 and S8.

With S4 and S12 plays an important role in translational accuracy. Its function is as follows. Located at the back of the 30S subunit body where it stabilizes the conformation of the head with respect to the body. The chain is Small ribosomal subunit protein uS5 from Synechocystis sp. (strain ATCC 27184 / PCC 6803 / Kazusa).